We begin with the raw amino-acid sequence, 63 residues long: Beta-defensin 4 (63 aa).

The first 22 residues, 1 to 22 (MRIHYLLFTFLLVLLSPLAAFT), serve as a signal peptide directing secretion. Position 23 is a pyrrolidone carboxylic acid (Gln23). Cystine bridges form between Cys31-Cys59, Cys38-Cys52, and Cys42-Cys60.

This sequence belongs to the beta-defensin family. In terms of tissue distribution, tongue, esophagus and trachea.

Its subcellular location is the secreted. Its function is as follows. Exhibits antimicrobial activity against Gram-negative bacteria and Gram-positive bacteria. May act as a ligand for C-C chemokine receptor CCR6. Can bind to mouse (but not human) CCR6 and induce chemotactic activity of CCR6-expressing cells. The polypeptide is Beta-defensin 4 (Defb4) (Mus musculus (Mouse)).